A 217-amino-acid chain; its full sequence is Adenylate kinase (217 aa).

Residue 10 to 15 (GAGKGT) coordinates ATP. The interval 30-59 (STGDMFRAAMKEETQLGLEAKSFIDKGELV) is NMP. AMP-binding positions include Thr-31, Arg-36, 57 to 59 (ELV), 85 to 88 (GFPR), and Gln-92. The tract at residues 126–163 (GRRICKNCGATYHLVFNPPAKENVCDKCGGELYQRADD) is LID. Arg-127 contacts ATP. Zn(2+) is bound by residues Cys-130 and Cys-133. Residue 136–137 (TY) coordinates ATP. 2 residues coordinate Zn(2+): Cys-150 and Cys-153. AMP contacts are provided by Arg-160 and Arg-171. Lys-199 serves as a coordination point for ATP.

The protein belongs to the adenylate kinase family. As to quaternary structure, monomer.

Its subcellular location is the cytoplasm. The catalysed reaction is AMP + ATP = 2 ADP. The protein operates within purine metabolism; AMP biosynthesis via salvage pathway; AMP from ADP: step 1/1. Its function is as follows. Catalyzes the reversible transfer of the terminal phosphate group between ATP and AMP. Plays an important role in cellular energy homeostasis and in adenine nucleotide metabolism. This is Adenylate kinase from Bacillus pumilus (strain SAFR-032).